The primary structure comprises 324 residues: Glyoxylate/hydroxypyruvate reductase B (324 aa).

Active-site residues include Arg237 and Glu266. Catalysis depends on His285, which acts as the Proton donor.

Belongs to the D-isomer specific 2-hydroxyacid dehydrogenase family. GhrB subfamily. As to quaternary structure, homodimer.

Its subcellular location is the cytoplasm. The enzyme catalyses glycolate + NADP(+) = glyoxylate + NADPH + H(+). It carries out the reaction (R)-glycerate + NAD(+) = 3-hydroxypyruvate + NADH + H(+). The catalysed reaction is (R)-glycerate + NADP(+) = 3-hydroxypyruvate + NADPH + H(+). Its function is as follows. Catalyzes the NADPH-dependent reduction of glyoxylate and hydroxypyruvate into glycolate and glycerate, respectively. The polypeptide is Glyoxylate/hydroxypyruvate reductase B (Escherichia coli O6:K15:H31 (strain 536 / UPEC)).